Reading from the N-terminus, the 139-residue chain is MNTVCTHCQAINRIPDDRIEDAAKCGRCGHDLFDGEVINATGETLDKLLKDDLPVVIDFWAPWCGPCRNFAPIFEDVAQERSGKVRFVKVNTEAERELSSRFGIRSIPTIMIFKNGQVVDMLNGAVPKAPFDSWLNESL.

The segment at 5-18 (CTHCQAINRIPDDR) is a zinc-finger region. Positions 26-139 (GRCGHDLFDG…PFDSWLNESL (114 aa)) constitute a Thioredoxin domain. C64 and C67 are oxidised to a cystine.

It belongs to the thioredoxin family.

Its subcellular location is the cytoplasm. It carries out the reaction [protein]-dithiol + NAD(+) = [protein]-disulfide + NADH + H(+). It catalyses the reaction [protein]-dithiol + NADP(+) = [protein]-disulfide + NADPH + H(+). Functionally, efficient electron donor for the essential enzyme ribonucleotide reductase. Is also able to reduce the interchain disulfide bridges of insulin. The polypeptide is Thioredoxin 2 (trxC) (Escherichia coli O6:H1 (strain CFT073 / ATCC 700928 / UPEC)).